The chain runs to 364 residues: Apelin receptor (364 aa).

Over 1 to 39 (MATDEFSSSTTPSYDYYDYTNESGLPPCDETDWDLSYSL) the chain is Extracellular. N21 carries N-linked (GlcNAc...) asparagine glycosylation. Disulfide bonds link C28–C288 and C110–C187. Residues 40–60 (LPVFYMIVFVLGLSGNGVVIF) form a helical membrane-spanning segment. At 61–78 (TVWKAKPKRRSADTYIGN) the chain is on the cytoplasmic side. Residues 79–99 (LALADLAFVVTLPLWATYTAL) traverse the membrane as a helical segment. Over 100–112 (GFHWPFGSALCKL) the chain is Extracellular. Residues 113-133 (SSYLVLLNMFASVFCLTCLSF) traverse the membrane as a helical segment. Topologically, residues 134–153 (DRYLAIVHSLSSAKLRSRSS) are cytoplasmic. The chain crosses the membrane as a helical span at residues 154 to 174 (ILVSLAVIWLFSGLLALPSLI). The Extracellular segment spans residues 175–201 (LRDTRVEGNNTICDLDFSGVSSKENEN). An N-linked (GlcNAc...) asparagine glycan is attached at N183. A helical transmembrane segment spans residues 202-222 (FWIGGLSILTTVPGFLLPLLL). At 223-250 (MTIFYCFIGGKVTMHFQNLKKEEQKKKR) the chain is on the cytoplasmic side. The helical transmembrane segment at 251-271 (LLKIIITLVVVFAICWLPFHI) threads the bilayer. Over 272–298 (LKTIHFLDLMGFLELSCSTQNIIVSLH) the chain is Extracellular. Residues 299–319 (PYATCLAYINSCLNPFLYAFF) traverse the membrane as a helical segment. At 320–364 (DLRFRSQCFFFFGFKKALQGHLSNTSSSLSAQTQKSEIHSLATKV) the chain is on the cytoplasmic side.

It belongs to the G-protein coupled receptor 1 family.

Its subcellular location is the cell membrane. Functionally, g protein-coupled receptor for peptide hormones apelin (apln) and apelin receptor early endogenous ligand (apela), that plays a role in the regulation of normal cardiovascular function and fluid homeostasis. When acting as apelin receptor, activates both G(i) protein pathway that inhibits adenylate cyclase activity, and the beta-arrestin pathway that promotes internalization of the receptor. Also functions as mechanoreceptor that is activated by pathological stimuli in a G-protein-independent fashion to induce beta-arrestin signaling, hence eliciting cardiac hypertrophy. However, the presence of apelin ligand blunts cardiac hypertrophic induction from APLNR/APJ on response to pathological stimuli. Plays a key role in early development such as gastrulation, blood vessels formation and heart morphogenesis by acting as a receptor for apela hormone, promoting endoderm and mesendoderm cell migration and regulating the migration of cells fated to become myocardial progenitors, respectively. Promotes angioblast migration toward the embryonic midline, i.e. the position of the future vessel formation, during vasculogenesis. May promote sinus venosus (SV)-derived endothelial cells migration into the developing heart to promote coronary blood vessel development. Required for cardiovascular development, particularly for intersomitic vein angiogenesis. Plays also a role in various processes in adults such as regulation of blood vessel formation, blood pressure, heart contractility, and heart failure. Acts upstream of the i/o type of G-alpha proteins in the differentiation of endothelium, erythroid cells, myeloid cells and cardiomyocytes. This is Apelin receptor (aplnr) from Xenopus tropicalis (Western clawed frog).